We begin with the raw amino-acid sequence, 58 residues long: Large ribosomal subunit protein bL32c (58 aa).

2 disordered regions span residues 1–21 (MAVP…SQWM) and 34–58 (LAGR…MQPN). The segment covering 44 to 58 (QMQPTQMQPTQMQPN) has biased composition (low complexity).

Belongs to the bacterial ribosomal protein bL32 family.

It localises to the plastid. The protein localises to the chloroplast. This Cyanidioschyzon merolae (strain NIES-3377 / 10D) (Unicellular red alga) protein is Large ribosomal subunit protein bL32c.